The primary structure comprises 392 residues: ADP-ribosylhydrolase ARH1 (392 aa).

Mg(2+)-binding residues include serine 79, aspartate 80, and aspartate 81. Lysine 109 lines the substrate pocket. Residues 125-127 (IQT) form a substrate region. Position 159 (glycine 159) interacts with substrate. 3 substrate regions span residues 192-194 (HNN), 309-311 (FSG), and 315-316 (SS). Residues aspartate 348, aspartate 350, and serine 351 each contribute to the Mg(2+) site.

This sequence belongs to the ADP-ribosylglycohydrolase family. In terms of assembly, monomer. The cofactor is Mg(2+).

The catalysed reaction is N(omega)-(ADP-D-ribosyl)-L-arginyl-[protein] + H2O = ADP-D-ribose + L-arginyl-[protein]. In terms of biological role, specifically acts as an arginine mono-ADP-ribosylhydrolase by mediating the removal of mono-ADP-ribose attached to arginine residues on proteins. The sequence is that of ADP-ribosylhydrolase ARH1 (adprh) from Dictyostelium discoideum (Social amoeba).